Consider the following 241-residue polypeptide: F-box protein At3g22350 (241 aa).

The 44-residue stretch at methionine 1–histidine 44 folds into the F-box domain.

The sequence is that of F-box protein At3g22350 from Arabidopsis thaliana (Mouse-ear cress).